The following is a 796-amino-acid chain: ER degradation-enhancing alpha-mannosidase-like protein 1 (796 aa).

Positions 1 to 20 (MVCCLWVLLALLLHLDHVAC) are cleaved as a signal peptide. An N-linked (GlcNAc...) asparagine glycan is attached at asparagine 86. Glutamate 372 acts as the Proton donor in catalysis. Threonine 495 serves as a coordination point for Ca(2+). 3 N-linked (GlcNAc...) asparagine glycosylation sites follow: asparagine 517, asparagine 672, and asparagine 762.

It belongs to the glycosyl hydrolase 47 family. As to quaternary structure, interacts with PDI1. Ca(2+) serves as cofactor.

The protein localises to the endoplasmic reticulum lumen. The enzyme catalyses Hydrolysis of terminal, non-reducing alpha-D-mannose residues in alpha-D-mannosides.. The protein operates within protein modification; protein glycosylation. Alpha-1,2-specific exomannosidase involved in endoplasmic reticulum-associated degradation (ERAD). Delivers misfolded glycoproteins to proteasomes. Forms a complex with PDI1 to process unfolded protein-bound Man8GlcNAc2 oligosaccharides to Man7GlcNAc2, promoting degradation in unfolded protein response. The protein is ER degradation-enhancing alpha-mannosidase-like protein 1 (MNL1) of Saccharomyces cerevisiae (strain ATCC 204508 / S288c) (Baker's yeast).